Consider the following 23-residue polypeptide: Aurein-4.1 (23 aa).

Belongs to the frog skin active peptide (FSAP) family. Aurein subfamily. Expressed by the skin dorsal glands.

Its subcellular location is the secreted. Functionally, has no antimicrobial or anticancer activity. In Ranoidea aurea (Green and golden bell frog), this protein is Aurein-4.1.